A 394-amino-acid polypeptide reads, in one-letter code: Elongation factor Tu (394 aa).

The tr-type G domain occupies 10 to 204 (KPHVNIGTIG…AVDSYIPQPV (195 aa)). A G1 region spans residues 19–26 (GHVDHGKT). Residue 19-26 (GHVDHGKT) coordinates GTP. Residue threonine 26 participates in Mg(2+) binding. Residues 60-64 (GITIS) are G2. The segment at 81–84 (DCPG) is G3. Residues 81–85 (DCPGH) and 136–139 (NKVD) each bind GTP. Positions 136–139 (NKVD) are G4. The segment at 174-176 (SAL) is G5.

Belongs to the TRAFAC class translation factor GTPase superfamily. Classic translation factor GTPase family. EF-Tu/EF-1A subfamily. As to quaternary structure, monomer.

Its subcellular location is the cytoplasm. The catalysed reaction is GTP + H2O = GDP + phosphate + H(+). Functionally, GTP hydrolase that promotes the GTP-dependent binding of aminoacyl-tRNA to the A-site of ribosomes during protein biosynthesis. The chain is Elongation factor Tu from Rickettsia rhipicephali.